A 359-amino-acid chain; its full sequence is Phospho-N-acetylmuramoyl-pentapeptide-transferase (359 aa).

10 helical membrane passes run 24–44, 72–92, 100–120, 134–154, 170–190, 197–217, 234–254, 261–281, 289–309, and 336–356; these read FRAL…SPIF, FVPS…SILL, TWIM…DDFV, MLGQ…VMHI, LGYF…NAVN, GLAI…SYVA, AGEL…FLWF, MFMG…LAIM, IIAG…VSVF, and KIVV…IATL.

This sequence belongs to the glycosyltransferase 4 family. MraY subfamily. Mg(2+) serves as cofactor.

The protein resides in the cell inner membrane. The catalysed reaction is UDP-N-acetyl-alpha-D-muramoyl-L-alanyl-gamma-D-glutamyl-meso-2,6-diaminopimeloyl-D-alanyl-D-alanine + di-trans,octa-cis-undecaprenyl phosphate = di-trans,octa-cis-undecaprenyl diphospho-N-acetyl-alpha-D-muramoyl-L-alanyl-D-glutamyl-meso-2,6-diaminopimeloyl-D-alanyl-D-alanine + UMP. It participates in cell wall biogenesis; peptidoglycan biosynthesis. Catalyzes the initial step of the lipid cycle reactions in the biosynthesis of the cell wall peptidoglycan: transfers peptidoglycan precursor phospho-MurNAc-pentapeptide from UDP-MurNAc-pentapeptide onto the lipid carrier undecaprenyl phosphate, yielding undecaprenyl-pyrophosphoryl-MurNAc-pentapeptide, known as lipid I. This is Phospho-N-acetylmuramoyl-pentapeptide-transferase from Hydrogenobaculum sp. (strain Y04AAS1).